The sequence spans 467 residues: ATP synthase subunit beta, chloroplastic (467 aa).

149–156 (GGAGVGKT) lines the ATP pocket.

This sequence belongs to the ATPase alpha/beta chains family. F-type ATPases have 2 components, CF(1) - the catalytic core - and CF(0) - the membrane proton channel. CF(1) has five subunits: alpha(3), beta(3), gamma(1), delta(1), epsilon(1). CF(0) has four main subunits: a(1), b(1), b'(1) and c(9-12).

It is found in the plastid. Its subcellular location is the chloroplast thylakoid membrane. The enzyme catalyses ATP + H2O + 4 H(+)(in) = ADP + phosphate + 5 H(+)(out). In terms of biological role, produces ATP from ADP in the presence of a proton gradient across the membrane. The catalytic sites are hosted primarily by the beta subunits. In Cyanidioschyzon merolae (strain NIES-3377 / 10D) (Unicellular red alga), this protein is ATP synthase subunit beta, chloroplastic.